A 317-amino-acid polypeptide reads, in one-letter code: Non-structural protein 2 (317 aa).

ATP-binding positions include 107–109 (SVR), Lys-188, and 221–223 (HGK). The tract at residues 205–241 (LVAELRWQYNRFAVITHGKGHYRVVKYSSVANHADRV) is RNA-binding. Catalysis depends on His-225, which acts as the For NTPase and RTPase activities. Arg-227 lines the ATP pocket.

It belongs to the rotavirus NSP2 family. In terms of assembly, homooctamer. Interacts with VP1; this interaction is weak. Interacts with NSP5; this interaction leads to up-regulation of NSP5 phosphorylation and formation of viral factories. Interacts with host DCP1A, DCP1B, DDX6, EDC4 and EIF2S1/eIF2-alpha; these interactions are probably part of the sequestration of some host SGs and PBs proteins in viral factories. It depends on Mg(2+) as a cofactor.

The protein resides in the host cytoplasm. Its function is as follows. Participates in replication and packaging of the viral genome. Plays a crucial role, together with NSP5, in the formation of virus factories (viroplasms), which are large inclusions in the host cytoplasm where replication intermediates are assembled and viral RNA replication takes place. Displays ssRNA binding, NTPase, RNA triphosphatase (RTPase) and ATP-independent helix-unwinding activities. The unwinding activity may prepare and organize plus-strand RNAs for packaging and replication by removing interfering secondary structures. The RTPase activity plays a role in the removal of the gamma-phosphate from the rotavirus RNA minus strands of dsRNA genome segments. Participates in the selective exclusion of host proteins from stress granules (SG) and P bodies (PB). Also participates in the sequestration of these remodeled organelles in viral factories. In Rotavirus A (strain RVA/Human/United States/Wa/1974/G1P1A[8]) (RV-A), this protein is Non-structural protein 2.